Here is a 426-residue protein sequence, read N- to C-terminus: Serine--tRNA ligase (426 aa).

Residue 230-232 (TAE) coordinates L-serine. 261–263 (RSE) provides a ligand contact to ATP. Glutamate 284 contributes to the L-serine binding site. 348 to 351 (EISS) lines the ATP pocket. Serine 384 contacts L-serine.

This sequence belongs to the class-II aminoacyl-tRNA synthetase family. Type-1 seryl-tRNA synthetase subfamily. Homodimer. The tRNA molecule binds across the dimer.

It is found in the cytoplasm. The enzyme catalyses tRNA(Ser) + L-serine + ATP = L-seryl-tRNA(Ser) + AMP + diphosphate + H(+). It catalyses the reaction tRNA(Sec) + L-serine + ATP = L-seryl-tRNA(Sec) + AMP + diphosphate + H(+). It participates in aminoacyl-tRNA biosynthesis; selenocysteinyl-tRNA(Sec) biosynthesis; L-seryl-tRNA(Sec) from L-serine and tRNA(Sec): step 1/1. Catalyzes the attachment of serine to tRNA(Ser). Is also able to aminoacylate tRNA(Sec) with serine, to form the misacylated tRNA L-seryl-tRNA(Sec), which will be further converted into selenocysteinyl-tRNA(Sec). In Erythrobacter litoralis (strain HTCC2594), this protein is Serine--tRNA ligase.